The primary structure comprises 200 residues: Recombination protein RecR (200 aa).

The segment at 58–75 (CSTCFCLKNLPESNCEFC) adopts a C4-type zinc-finger fold. A Toprim domain is found at 82-177 (STLCIVATPK…SISRLALGLP (96 aa)).

This sequence belongs to the RecR family.

May play a role in DNA repair. It seems to be involved in an RecBC-independent recombinational process of DNA repair. It may act with RecF and RecO. The protein is Recombination protein RecR of Chlamydia caviae (strain ATCC VR-813 / DSM 19441 / 03DC25 / GPIC) (Chlamydophila caviae).